An 82-amino-acid polypeptide reads, in one-letter code: Acyl carrier protein (82 aa).

The 76-residue stretch at 2–77 (DNVADRVKKV…QAIDYVSAHI (76 aa)) folds into the Carrier domain. Residue Ser37 is modified to O-(pantetheine 4'-phosphoryl)serine.

Belongs to the acyl carrier protein (ACP) family. 4'-phosphopantetheine is transferred from CoA to a specific serine of apo-ACP by AcpS. This modification is essential for activity because fatty acids are bound in thioester linkage to the sulfhydryl of the prosthetic group.

It is found in the cytoplasm. Its pathway is lipid metabolism; fatty acid biosynthesis. Carrier of the growing fatty acid chain in fatty acid biosynthesis. In Acidithiobacillus ferrooxidans (strain ATCC 23270 / DSM 14882 / CIP 104768 / NCIMB 8455) (Ferrobacillus ferrooxidans (strain ATCC 23270)), this protein is Acyl carrier protein.